The chain runs to 165 residues: Crossover junction endodeoxyribonuclease RuvC (165 aa).

Residues aspartate 6, glutamate 67, and aspartate 142 contribute to the active site. Positions 6, 67, and 142 each coordinate Mg(2+).

Belongs to the RuvC family. As to quaternary structure, homodimer which binds Holliday junction (HJ) DNA. The HJ becomes 2-fold symmetrical on binding to RuvC with unstacked arms; it has a different conformation from HJ DNA in complex with RuvA. In the full resolvosome a probable DNA-RuvA(4)-RuvB(12)-RuvC(2) complex forms which resolves the HJ. Mg(2+) serves as cofactor.

It is found in the cytoplasm. The catalysed reaction is Endonucleolytic cleavage at a junction such as a reciprocal single-stranded crossover between two homologous DNA duplexes (Holliday junction).. Functionally, the RuvA-RuvB-RuvC complex processes Holliday junction (HJ) DNA during genetic recombination and DNA repair. Endonuclease that resolves HJ intermediates. Cleaves cruciform DNA by making single-stranded nicks across the HJ at symmetrical positions within the homologous arms, yielding a 5'-phosphate and a 3'-hydroxyl group; requires a central core of homology in the junction. The consensus cleavage sequence is 5'-(A/T)TT(C/G)-3'. Cleavage occurs on the 3'-side of the TT dinucleotide at the point of strand exchange. HJ branch migration catalyzed by RuvA-RuvB allows RuvC to scan DNA until it finds its consensus sequence, where it cleaves and resolves the cruciform DNA. This chain is Crossover junction endodeoxyribonuclease RuvC, found in Chlamydia abortus (strain DSM 27085 / S26/3) (Chlamydophila abortus).